Consider the following 628-residue polypeptide: DNA-directed RNA polymerase subunit beta' (628 aa).

Zn(2+)-binding residues include Cys70, Cys72, Cys85, and Cys88. The Mg(2+) site is built by Asp472, Asp474, and Asp476.

It belongs to the RNA polymerase beta' chain family. RpoC1 subfamily. In terms of assembly, in plastids the minimal PEP RNA polymerase catalytic core is composed of four subunits: alpha, beta, beta', and beta''. When a (nuclear-encoded) sigma factor is associated with the core the holoenzyme is formed, which can initiate transcription. Requires Mg(2+) as cofactor. Zn(2+) serves as cofactor.

The protein localises to the plastid. It localises to the chloroplast. The enzyme catalyses RNA(n) + a ribonucleoside 5'-triphosphate = RNA(n+1) + diphosphate. Its function is as follows. DNA-dependent RNA polymerase catalyzes the transcription of DNA into RNA using the four ribonucleoside triphosphates as substrates. The chain is DNA-directed RNA polymerase subunit beta' from Gracilaria tenuistipitata var. liui (Red alga).